The following is a 2374-amino-acid chain: Genome polyprotein (2374 aa).

Glycine 115 is lipidated: N-myristoyl glycine; by host. Disordered stretches follow at residues 144 to 176 (GDMPTASTSEAPLGSNKGGSSTSPKSTSNGNVV) and 707 to 739 (GADGAEVQPAPTSDLSDGNPTTDPAPRDNFDYP). The span at 157–174 (GSNKGGSSTSPKSTSNGN) shows a compositional bias: low complexity. The segment covering 716 to 728 (APTSDLSDGNPTT) has biased composition (polar residues). Residues 1361–1525 (YSTALSAISL…VAFSAAAALQ (165 aa)) form the SF3 helicase domain. 1387-1394 (GPPGTGKS) lines the ATP pocket. A lipid anchor (N-myristoyl glycine; by host) is attached at glycine 1600. Residues 1649-1669 (IFAASSFLSLIAATLTIVRCL) traverse the membrane as a helical segment. Residues 1677-1699 (GAYSGTPVPKPRKKDLPKQPVYS) form a disordered region. Tyrosine 1679 bears the O-(5'-phospho-RNA)-tyrosine mark. The 190-residue stretch at 1700–1889 (GPVRRQGFDP…FSARLTPERV (190 aa)) folds into the Peptidase C3 domain. Active-site for protease 3C activity residues include histidine 1748, glutamate 1779, and cysteine 1852. The RdRp catalytic domain occupies 2126 to 2243 (SNVWSIDYSC…GSNQDFHPRE (118 aa)). Residues aspartate 2132 and aspartate 2229 each act as for RdRp activity in the active site.

As to quaternary structure, interacts with capsid protein VP1. Interacts with capsid protein VP3. In terms of assembly, interacts with capsid protein VP0. Interacts with capsid protein VP3. Interacts with capsid protein VP0. Interacts with capsid protein VP1. As to quaternary structure, homodimer. Interacts with protein 2B. Interacts with protein 2C. In terms of assembly, homodimer. Interacts with host ABCD3. Interacts with protein 2A. Interacts with host ACBD3. Homodimer. Interacts with host ABCD3. Interacts with protein 2A. Interacts with protein 3A. Interacts with protein 3C. Interacts with host ACBD3. As to quaternary structure, homodimer. Interacts with host ABCD3 (via GOLD domain) and PI4KB; these interactions allow the formation of a viral protein/ACBD3/PI4KB complex in order to synthesize PI4P at the viral RNA replication sites. Interacts with protein 2C. Interacts with protein 3C. Protein 3C: Interacts with protein 2A. Protein 3C: Interacts with protein 2C. Specific enzymatic cleavages by the viral protease in vivo yield a variety of precursors and mature proteins. The leader protein-VP0 junction is cleaved by 3C proteinase. The VP1/2A junction is cleaved by the protein 3CD in association with protein 2A. In terms of processing, uridylylated by the polymerase and is covalently linked to the 5'-end of genomic RNA. This uridylylated form acts as a nucleotide-peptide primer for the polymerase.

It is found in the virion. Its subcellular location is the host cytoplasm. The protein resides in the host cytoplasmic vesicle membrane. The protein localises to the host Golgi apparatus membrane. It carries out the reaction Selective cleavage of Gln-|-Gly bond in the poliovirus polyprotein. In other picornavirus reactions Glu may be substituted for Gln, and Ser or Thr for Gly.. The catalysed reaction is RNA(n) + a ribonucleoside 5'-triphosphate = RNA(n+1) + diphosphate. The enzyme catalyses ATP + H2O = ADP + phosphate + H(+). Required for viral RNA replication and viral RNA encapsidation. Does not have any proteolytic activity. Its function is as follows. Forms an icosahedral capsid of pseudo T=3 symmetry with capsid proteins VP0 and VP3. Together they form an icosahedral capsid composed of 60 copies of each VP0, VP1, and VP3. All the three latter proteins contain a beta-sheet structure called beta-barrel jelly roll. In terms of biological role, forms an icosahedral capsid of pseudo T=3 symmetry with capsid proteins VP1 and VP3. Together they form an icosahedral capsid composed of 60 copies of each VP0, VP1, and VP3. All the three latter proteins contain a beta-sheet structure called beta-barrel jelly roll. Functionally, forms an icosahedral capsid of pseudo T=3 symmetry with capsid proteins VP0 and VP1. Together they form an icosahedral capsid composed of 60 copies of each VP0, VP1, and VP3. All the three latter proteins contain a beta-sheet structure called beta-barrel jelly roll. Required for viral RNA replication. Does not have any proteolytic activity. Its function is as follows. Affects membrane integrity and causes an increase in membrane permeability. In terms of biological role, induces and associates with structural rearrangements of intracellular membranes. Displays RNA-binding, nucleotide binding and NTPase activities. May play a role in virion morphogenesis and viral RNA encapsidation by interacting with the capsid protein VP3. Functionally, serves as membrane anchor via its hydrophobic domain. Plays an essential role in viral RNA replication by recruiting PI4KB at the viral replication sites, thereby allowing the formation of rearranged membranous structures where viral replication takes place. Forms a primer, VPg-pU, which is utilized by the polymerase for the initiation of RNA chains. Its function is as follows. Cysteine protease that generates mature viral proteins from the precursor polyprotein. In addition to its proteolytic activity, it binds to viral RNA, and thus influences viral genome replication. RNA and substrate cooperatively bind to the protease. In terms of biological role, replicates the genomic and antigenomic RNAs by recognizing replications specific signals. Performs VPg uridylylation. This Salivirus A (isolate Human/Nigeria/NG-J1/2007) (SV-A) protein is Genome polyprotein.